The primary structure comprises 281 residues: Probable feruloyl esterase A (281 aa).

The N-terminal stretch at 1–21 is a signal peptide; sequence MKNFFSMHAILLACSAGAGLA. 3 cysteine pairs are disulfide-bonded: Cys-50-Cys-279, Cys-112-Cys-115, and Cys-248-Cys-255. Substrate is bound at residue Asp-98. N-linked (GlcNAc...) asparagine glycosylation is present at Asn-100. A substrate-binding site is contributed by Tyr-101. The active-site Nucleophile is Ser-154. Residue Asn-173 is glycosylated (N-linked (GlcNAc...) asparagine). Residue Asp-215 is the Charge relay system of the active site. A substrate-binding site is contributed by His-268. His-268 serves as the catalytic Charge relay system.

It belongs to the AB hydrolase superfamily. FaeA family.

It is found in the secreted. It catalyses the reaction feruloyl-polysaccharide + H2O = ferulate + polysaccharide.. Its function is as follows. Involved in degradation of plant cell walls. Hydrolyzes the feruloyl-arabinose ester bond in arabinoxylans, and the feruloyl-galactose ester bond in pectin. The protein is Probable feruloyl esterase A (faeA) of Aspergillus oryzae (strain ATCC 42149 / RIB 40) (Yellow koji mold).